The primary structure comprises 518 residues: Probable thiamine biosynthetic bifunctional enzyme (518 aa).

The segment at 1–229 (MKRQIDYSLY…ATPPCFAQAR (229 aa)) is thiamine-phosphate synthase. Residues 40 to 44 (QHREK) and Asn-72 each bind 4-amino-2-methyl-5-(diphosphooxymethyl)pyrimidine. 2 residues coordinate Mg(2+): Asp-73 and Asp-92. Residue Ser-111 coordinates 4-amino-2-methyl-5-(diphosphooxymethyl)pyrimidine. 137–139 (TNT) lines the 2-[(2R,5Z)-2-carboxy-4-methylthiazol-5(2H)-ylidene]ethyl phosphate pocket. 4-amino-2-methyl-5-(diphosphooxymethyl)pyrimidine is bound at residue Lys-140. 2-[(2R,5Z)-2-carboxy-4-methylthiazol-5(2H)-ylidene]ethyl phosphate contacts are provided by residues Gly-173 and 199–200 (VS). Residues 230–518 (SSLTTPKDLL…IERAKLEKAE (289 aa)) form a hydroxyethylthiazole kinase region. Met-281 is a 5-(2-hydroxyethyl)-4-methylthiazole binding site. Residues Lys-355 and Ser-403 each contribute to the ATP site. Residue Ala-430 participates in 5-(2-hydroxyethyl)-4-methylthiazole binding. Cys-433 serves as the catalytic Proton acceptor; for hydroxyethylthiazole kinase activity.

It in the N-terminal section; belongs to the thiamine-phosphate synthase family. In the C-terminal section; belongs to the Thz kinase family. It depends on Mg(2+) as a cofactor.

The catalysed reaction is 2-[(2R,5Z)-2-carboxy-4-methylthiazol-5(2H)-ylidene]ethyl phosphate + 4-amino-2-methyl-5-(diphosphooxymethyl)pyrimidine + 2 H(+) = thiamine phosphate + CO2 + diphosphate. It carries out the reaction 2-(2-carboxy-4-methylthiazol-5-yl)ethyl phosphate + 4-amino-2-methyl-5-(diphosphooxymethyl)pyrimidine + 2 H(+) = thiamine phosphate + CO2 + diphosphate. The enzyme catalyses 4-methyl-5-(2-phosphooxyethyl)-thiazole + 4-amino-2-methyl-5-(diphosphooxymethyl)pyrimidine + H(+) = thiamine phosphate + diphosphate. It catalyses the reaction 5-(2-hydroxyethyl)-4-methylthiazole + ATP = 4-methyl-5-(2-phosphooxyethyl)-thiazole + ADP + H(+). The protein operates within cofactor biosynthesis; thiamine diphosphate biosynthesis; 4-methyl-5-(2-phosphoethyl)-thiazole from 5-(2-hydroxyethyl)-4-methylthiazole: step 1/1. It functions in the pathway cofactor biosynthesis; thiamine diphosphate biosynthesis; thiamine phosphate from 4-amino-2-methyl-5-diphosphomethylpyrimidine and 4-methyl-5-(2-phosphoethyl)-thiazole: step 1/1. Functionally, condenses 4-methyl-5-(beta-hydroxyethyl)thiazole monophosphate (THZ-P) and 2-methyl-4-amino-5-hydroxymethyl pyrimidine pyrophosphate (HMP-PP) to form thiamine monophosphate (TMP). The chain is Probable thiamine biosynthetic bifunctional enzyme (thi4) from Schizosaccharomyces pombe (strain 972 / ATCC 24843) (Fission yeast).